A 251-amino-acid chain; its full sequence is Probable transcriptional regulatory protein Arth_2304 (251 aa).

This sequence belongs to the TACO1 family.

The protein resides in the cytoplasm. This Arthrobacter sp. (strain FB24) protein is Probable transcriptional regulatory protein Arth_2304.